We begin with the raw amino-acid sequence, 476 residues long: Cardiolipin synthase (476 aa).

2 helical membrane passes run 2 to 22 (HLFINMIFLINIVFIISIIFI) and 31 to 51 (WAWILILTFLPILGFIIYILF). PLD phosphodiesterase domains are found at residues 207-234 (INYRNHRKILIIDSKVAFLGGFNIGDEY) and 389-416 (EKGFLHAKTIVADSSICSVGTANMDIRS). Catalysis depends on residues His212, Lys214, Asp219, His394, Lys396, and Asp401.

It belongs to the phospholipase D family. Cardiolipin synthase subfamily.

Its subcellular location is the cell membrane. It carries out the reaction 2 a 1,2-diacyl-sn-glycero-3-phospho-(1'-sn-glycerol) = a cardiolipin + glycerol. In terms of biological role, catalyzes the reversible phosphatidyl group transfer from one phosphatidylglycerol molecule to another to form cardiolipin (CL) (diphosphatidylglycerol) and glycerol. The protein is Cardiolipin synthase (cls) of Clostridium perfringens (strain 13 / Type A).